A 429-amino-acid chain; its full sequence is Histidine--tRNA ligase (429 aa).

The protein belongs to the class-II aminoacyl-tRNA synthetase family. As to quaternary structure, homodimer.

The protein resides in the cytoplasm. The enzyme catalyses tRNA(His) + L-histidine + ATP = L-histidyl-tRNA(His) + AMP + diphosphate + H(+). In Pseudomonas putida (strain GB-1), this protein is Histidine--tRNA ligase.